Consider the following 407-residue polypeptide: Substance-P receptor (407 aa).

Topologically, residues 1–31 (MDNVLPGDSDLFPNISTNSSESNQFVQPAWQ) are extracellular. 2 N-linked (GlcNAc...) asparagine glycosylation sites follow: Asn14 and Asn18. The chain crosses the membrane as a helical span at residues 32-54 (IVLWAAAYTVIVVTSVVGNVVVM). Topologically, residues 55-64 (WIILAHKRMR) are cytoplasmic. A helical transmembrane segment spans residues 65-86 (TVTNYFLVNLAFAEASMAAFNT). The Extracellular segment spans residues 87-106 (VVNFTYAVHNEWYYGLFYCK). Residue Asn89 is glycosylated (N-linked (GlcNAc...) asparagine). A disulfide bond links Cys105 and Cys180. Residues 107-128 (FHNFFPIAAVFASIYSMTAVAF) form a helical membrane-spanning segment. The Cytoplasmic segment spans residues 129-148 (DRYMAIIHPLQPRLSATATK). The helical transmembrane segment at 149–169 (VVIFVIWVLALLLAFPQGYYS) threads the bilayer. Residues 170–194 (TTETMPGRVVCMIEWPEHPNRTYEK) lie on the Extracellular side of the membrane. N-linked (GlcNAc...) asparagine glycosylation is present at Asn189. A helical membrane pass occupies residues 195–219 (AYHICVTVLIYFLPLLVIGYAYTVV). Residues 220 to 248 (GITLWASEIPGDSSDRYHEQVSAKRKVVK) are Cytoplasmic-facing. The helical transmembrane segment at 249–270 (MMIVVVCTFAICWLPFHVFFLL) threads the bilayer. Residues 271–283 (PYINPDLYVKKFI) are Extracellular-facing. A helical transmembrane segment spans residues 284-308 (QQVYLAIMWLAMSSTMYNPIIYCCL). At 309 to 407 (NDRFRLGFKH…SSSFYSNMLA (99 aa)) the chain is on the cytoplasmic side. Residue Cys322 is the site of S-palmitoyl cysteine attachment. The interval 365–407 (HEDEAEEGPKATPSSLDLTSNGSSRSNSKTMTESSSFYSNMLA) is disordered. Positions 376–407 (TPSSLDLTSNGSSRSNSKTMTESSSFYSNMLA) are enriched in polar residues.

The protein belongs to the G-protein coupled receptor 1 family. In terms of assembly, interacts with ARRB1.

It localises to the cell membrane. Functionally, this is a receptor for the tachykinin neuropeptide substance P. It is probably associated with G proteins that activate a phosphatidylinositol-calcium second messenger system. This chain is Substance-P receptor (TACR1), found in Meriones unguiculatus (Mongolian jird).